The primary structure comprises 255 residues: Homeobox protein DLX-1 (255 aa).

Positions 1–14 (MTMTTMPESLNSPV) are enriched in polar residues. Disordered regions lie at residues 1–38 (MTMTTMPESLNSPVSGKAVFMEFGPPNQQMSPSPMSHG) and 95–118 (SLAQSRLEDPGADSEKSTVVEGGE). Low complexity predominate over residues 25–36 (PPNQQMSPSPMS). Positions 100–112 (RLEDPGADSEKST) are enriched in basic and acidic residues. Positions 128–187 (IRKPRTIYSSLQLQALNRRFQQTQYLALPERAELAASLGLTQTQVKIWFQNKRSKFKKLM) form a DNA-binding region, homeobox. Residues 204–233 (ALSAGSPPVPPGWNPNSSSGKGSGSSAGSY) are disordered. The span at 217–232 (NPNSSSGKGSGSSAGS) shows a compositional bias: low complexity.

This sequence belongs to the distal-less homeobox family. In terms of assembly, interacts with SMAD4 (via homeobox DNA-binding domain). Interacts (via homeobox DNA-binding domain) with POU4F2; this interaction suppresses DLX1-mediated transcriptional activity in postnatal retina and enhances retinal ganglion cell (RGC) differentiation. In terms of tissue distribution, expressed in a restricted region of the developing brain, within the diencephalon and the adjacent telencephalic regions.

Its subcellular location is the nucleus. Its function is as follows. Plays a role as a transcriptional activator or repressor. Inhibits several cytokine signaling pathways, such as TGFB1, activin-A/INHBA and BMP4 by interfering with the transcriptional stimulatory activity of transcription factors, such as MSX2, FAST2, SMAD2 and SMAD3 during hematopoietic cell differentiation. Plays a role in terminal differentiation of interneurons, such as amacrine and bipolar cells in the developing retina. Likely to play a regulatory role in the development of the ventral forebrain. May play a role in craniofacial patterning and morphogenesis and may be involved in the early development of diencephalic subdivisions. This is Homeobox protein DLX-1 (Dlx1) from Mus musculus (Mouse).